We begin with the raw amino-acid sequence, 220 residues long: NAD(P)H-quinone oxidoreductase subunit M, chloroplastic (220 aa).

Residues 1-37 (MATTASPFLSPAKLSLERRLPRATWTARRSVRFPPVR) constitute a chloroplast transit peptide. Residues 20–91 (LPRATWTARR…PVQPLAESKN (72 aa)) form a disordered region. Positions 34–44 (PPVRAQDQQQQ) are enriched in low complexity.

The protein belongs to the NDH complex subunit M family. In terms of assembly, part of the chloroplast NDH complex, composed of a mixture of chloroplast and nucleus encoded subunits. Component of the NDH subcomplex A, at least composed of ndhH, ndhI, ndhJ, ndhK, ndhL, ndhM, ndhN and ndhO.

It localises to the plastid. The protein localises to the chloroplast thylakoid membrane. It catalyses the reaction a plastoquinone + NADH + (n+1) H(+)(in) = a plastoquinol + NAD(+) + n H(+)(out). It carries out the reaction a plastoquinone + NADPH + (n+1) H(+)(in) = a plastoquinol + NADP(+) + n H(+)(out). Functionally, NDH shuttles electrons from NAD(P)H:plastoquinone, via FMN and iron-sulfur (Fe-S) centers, to quinones in the photosynthetic chain and possibly in a chloroplast respiratory chain. The immediate electron acceptor for the enzyme in this species is believed to be plastoquinone. Couples the redox reaction to proton translocation, and thus conserves the redox energy in a proton gradient. The protein is NAD(P)H-quinone oxidoreductase subunit M, chloroplastic of Oryza sativa subsp. indica (Rice).